The primary structure comprises 339 residues: Holliday junction branch migration complex subunit RuvB (339 aa).

The large ATPase domain (RuvB-L) stretch occupies residues 1–187 (MQGFEDENRI…FGVICKLDYY (187 aa)). Residues leucine 26, arginine 27, glycine 68, lysine 71, threonine 72, threonine 73, 134–136 (EDF), arginine 177, tyrosine 187, and arginine 224 contribute to the ATP site. Threonine 72 contributes to the Mg(2+) binding site. The interval 188–258 (TVDELSKIVL…VAKDALELLG (71 aa)) is small ATPAse domain (RuvB-S). The segment at 261-339 (SLGLDFVDEK…HLKIPYPNEK (79 aa)) is head domain (RuvB-H). DNA-binding residues include arginine 297, arginine 316, and arginine 321.

This sequence belongs to the RuvB family. Homohexamer. Forms an RuvA(8)-RuvB(12)-Holliday junction (HJ) complex. HJ DNA is sandwiched between 2 RuvA tetramers; dsDNA enters through RuvA and exits via RuvB. An RuvB hexamer assembles on each DNA strand where it exits the tetramer. Each RuvB hexamer is contacted by two RuvA subunits (via domain III) on 2 adjacent RuvB subunits; this complex drives branch migration. In the full resolvosome a probable DNA-RuvA(4)-RuvB(12)-RuvC(2) complex forms which resolves the HJ.

The protein localises to the cytoplasm. It catalyses the reaction ATP + H2O = ADP + phosphate + H(+). Its function is as follows. The RuvA-RuvB-RuvC complex processes Holliday junction (HJ) DNA during genetic recombination and DNA repair, while the RuvA-RuvB complex plays an important role in the rescue of blocked DNA replication forks via replication fork reversal (RFR). RuvA specifically binds to HJ cruciform DNA, conferring on it an open structure. The RuvB hexamer acts as an ATP-dependent pump, pulling dsDNA into and through the RuvAB complex. RuvB forms 2 homohexamers on either side of HJ DNA bound by 1 or 2 RuvA tetramers; 4 subunits per hexamer contact DNA at a time. Coordinated motions by a converter formed by DNA-disengaged RuvB subunits stimulates ATP hydrolysis and nucleotide exchange. Immobilization of the converter enables RuvB to convert the ATP-contained energy into a lever motion, pulling 2 nucleotides of DNA out of the RuvA tetramer per ATP hydrolyzed, thus driving DNA branch migration. The RuvB motors rotate together with the DNA substrate, which together with the progressing nucleotide cycle form the mechanistic basis for DNA recombination by continuous HJ branch migration. Branch migration allows RuvC to scan DNA until it finds its consensus sequence, where it cleaves and resolves cruciform DNA. The polypeptide is Holliday junction branch migration complex subunit RuvB (Clostridioides difficile (strain 630) (Peptoclostridium difficile)).